The chain runs to 232 residues: Ubiquinone biosynthesis O-methyltransferase (232 aa).

The S-adenosyl-L-methionine site is built by R36, G55, D76, and L120.

It belongs to the methyltransferase superfamily. UbiG/COQ3 family.

It carries out the reaction a 3-demethylubiquinol + S-adenosyl-L-methionine = a ubiquinol + S-adenosyl-L-homocysteine + H(+). The catalysed reaction is a 3-(all-trans-polyprenyl)benzene-1,2-diol + S-adenosyl-L-methionine = a 2-methoxy-6-(all-trans-polyprenyl)phenol + S-adenosyl-L-homocysteine + H(+). The protein operates within cofactor biosynthesis; ubiquinone biosynthesis. Functionally, O-methyltransferase that catalyzes the 2 O-methylation steps in the ubiquinone biosynthetic pathway. The protein is Ubiquinone biosynthesis O-methyltransferase of Pseudomonas paraeruginosa (strain DSM 24068 / PA7) (Pseudomonas aeruginosa (strain PA7)).